The following is a 151-amino-acid chain: 3-hydroxyacyl-[acyl-carrier-protein] dehydratase FabZ (151 aa).

His56 is an active-site residue.

Belongs to the thioester dehydratase family. FabZ subfamily.

It is found in the cytoplasm. It carries out the reaction a (3R)-hydroxyacyl-[ACP] = a (2E)-enoyl-[ACP] + H2O. Involved in unsaturated fatty acids biosynthesis. Catalyzes the dehydration of short chain beta-hydroxyacyl-ACPs and long chain saturated and unsaturated beta-hydroxyacyl-ACPs. This Rhodopseudomonas palustris (strain ATCC BAA-98 / CGA009) protein is 3-hydroxyacyl-[acyl-carrier-protein] dehydratase FabZ.